The sequence spans 508 residues: GMP synthase [glutamine-hydrolyzing] (508 aa).

A Glutamine amidotransferase type-1 domain is found at 1–189 (MILVLDFGSQ…ALLVCGCEKT (189 aa)). The active-site Nucleophile is the Cys78. Active-site residues include His163 and Glu165. Residues 190 to 383 (WGMQHFAQRE…LGVSQDFLMH (194 aa)) enclose the GMPS ATP-PPase domain. 217 to 223 (SGGVDST) contributes to the ATP binding site.

Homodimer.

It catalyses the reaction XMP + L-glutamine + ATP + H2O = GMP + L-glutamate + AMP + diphosphate + 2 H(+). Its pathway is purine metabolism; GMP biosynthesis; GMP from XMP (L-Gln route): step 1/1. Catalyzes the synthesis of GMP from XMP. The chain is GMP synthase [glutamine-hydrolyzing] from Helicobacter pylori (strain G27).